Here is a 100-residue protein sequence, read N- to C-terminus: Acylphosphatase (100 aa).

Positions 14–100 (RWRFFVEGKV…TGADWFEIRS (87 aa)) constitute an Acylphosphatase-like domain. Catalysis depends on residues arginine 29 and asparagine 47.

The protein belongs to the acylphosphatase family.

It carries out the reaction an acyl phosphate + H2O = a carboxylate + phosphate + H(+). This is Acylphosphatase (acyP) from Synechococcus sp. (strain WH7803).